Here is a 127-residue protein sequence, read N- to C-terminus: uncharacterized protein (127 aa).

A signal peptide spans 1 to 16; the sequence is MLKKIIFGITISLTTG. Cys17 carries N-palmitoyl cysteine lipidation. A lipid anchor (S-diacylglycerol cysteine) is attached at Cys17. Positions 56-101 form a coiled coil; the sequence is EVREEIQKYRVEIVDINKKKRELYNRLSKEAQSFLAEQQKYKQKLS. Residues 102-127 are disordered; that stretch reads IPKLLIENDPKNNTANSKDNNDKDMK.

The protein localises to the cell membrane. This is an uncharacterized protein from Rickettsia prowazekii (strain Madrid E).